Here is a 137-residue protein sequence, read N- to C-terminus: Large ribosomal subunit protein uL16 (137 aa).

The protein belongs to the universal ribosomal protein uL16 family. In terms of assembly, part of the 50S ribosomal subunit.

Binds 23S rRNA and is also seen to make contacts with the A and possibly P site tRNAs. This Bartonella tribocorum (strain CIP 105476 / IBS 506) protein is Large ribosomal subunit protein uL16.